Consider the following 102-residue polypeptide: Feather keratin (102 aa).

Serine 1 carries the post-translational modification N-acetylserine.

The protein belongs to the avian keratin family. In terms of assembly, the avian keratins (F-ker, S-ker, C-ker and B-ker) are a complex mixture of very similar polypeptides.

This Dromaius novaehollandiae (Emu) protein is Feather keratin.